The chain runs to 161 residues: MTRGPIFLNVGISYGLPRTKLPAAVSFRKWVAATLQGRIRKADLAIRIVDEKEGRALNYHYRNKDYATNVLSFPAQLPEPLPKALKIPLLGDIVMCAPVIAREAAEQGKSLSAHYAHLTVHGTLHLLGWNHEDHQEADAMEQLEREILANLGISDPYLEEY.

Zn(2+)-binding residues include histidine 121, histidine 125, and histidine 131.

It belongs to the endoribonuclease YbeY family. Zn(2+) serves as cofactor.

It is found in the cytoplasm. Single strand-specific metallo-endoribonuclease involved in late-stage 70S ribosome quality control and in maturation of the 3' terminus of the 16S rRNA. This is Endoribonuclease YbeY from Xylella fastidiosa (strain 9a5c).